The following is a 265-amino-acid chain: 5'-nucleotidase SurE (265 aa).

Positions 8, 9, 41, and 100 each coordinate a divalent metal cation.

It belongs to the SurE nucleotidase family. Requires a divalent metal cation as cofactor.

The protein localises to the cytoplasm. The catalysed reaction is a ribonucleoside 5'-phosphate + H2O = a ribonucleoside + phosphate. Its function is as follows. Nucleotidase that shows phosphatase activity on nucleoside 5'-monophosphates. The chain is 5'-nucleotidase SurE from Brevibacillus brevis (strain 47 / JCM 6285 / NBRC 100599).